We begin with the raw amino-acid sequence, 640 residues long: 1,4-alpha-glucan branching enzyme GlgB (640 aa).

Asp318 functions as the Nucleophile in the catalytic mechanism. The active-site Proton donor is Glu371.

Belongs to the glycosyl hydrolase 13 family. GlgB subfamily. In terms of assembly, monomer.

It carries out the reaction Transfers a segment of a (1-&gt;4)-alpha-D-glucan chain to a primary hydroxy group in a similar glucan chain.. The protein operates within glycan biosynthesis; glycogen biosynthesis. Catalyzes the formation of the alpha-1,6-glucosidic linkages in glycogen by scission of a 1,4-alpha-linked oligosaccharide from growing alpha-1,4-glucan chains and the subsequent attachment of the oligosaccharide to the alpha-1,6 position. This chain is 1,4-alpha-glucan branching enzyme GlgB, found in Francisella philomiragia subsp. philomiragia (strain ATCC 25017 / CCUG 19701 / FSC 153 / O#319-036).